A 911-amino-acid chain; its full sequence is MAARVAAAVAAALLAAALLLPGAAAEWTLTKKGTVVSYDERSLMIDGKRDLFFSGAIHYPRSPPEMWDKLVKTAKMGGLNTIETYVFWNGHEPEPGKYYFEGRFDLIRFLNVIKDNDMYAIVRIGPFIQAEWNHGGLPYWLREIGHIIFRANNEPFKREMEKFVRFIVQKLKDAEMFAPQGGPIILSQIENEYGNIKKDRKVEGDKYLEWAAEMAISTGIGVPWVMCKQSIAPGEVIPTCNGRHCGDTWTLLDKNKPRLWTENWTAQFRTFGDQLAQRSAEDIAYAVLRFFAKGGTLVNYYMYHGGTNFGRTGASYVLTGYYDEAPMDEYGMCKEPKFGHLRDLHNVIKSYHKAFLWGKQSFEILGHGYEAHNYELPEDKLCLSFLSNNNTGEDGTVVFRGEKFYVPSRSVSILADCKTVVYNTKRVFVQHSERSFHTTDETSKNNVWEMYSEAIPKFRKTKVRTKQPLEQYNQTKDTSDYLWYTTSFRLESDDLPFRRDIRPVIQIKSTAHAMIGFANDAFVGTGRGSKREKSFVFEKPMDLRVGINHIAMLSSSMGMKDSGGELVEVKGGIQDCVVQGLNTGTLDLQGNGWGHKARLEGEDKEIYTEKGMAQFQWKPAENDLPITWYKRYFDEPDGDDPIVVDMSSMSKGMIYVNGEGIGRYWTSFITLAGHPSQSVYHIPRAFLKPKGNLLIIFEEELGKPGGILIQTVRRDDICVFISEHNPAQIKTWESDGGQIKLIAEDTSTRGTLNCPPKRTIQEVVFASFGNPEGACGNFTAGTCHTPDAKAIVEKECLGKESCVLPVVNTVYGADINCPATTATLAVQLLLASHVMRIAICVRPMLFARNGIVTSVLAHILGHPEWDRKSLRVKMAGRQNPCPDFTPTKSYGYLFSKPLVALTVSLDSNLSP.

An N-terminal signal peptide occupies residues 1–25; that stretch reads MAARVAAAVAAALLAAALLLPGAAA. E192 functions as the Proton donor in the catalytic mechanism. E262 (nucleophile) is an active-site residue. N-linked (GlcNAc...) asparagine glycosylation is found at N263, N389, N473, and N777. Positions 744–831 constitute an SUEL-type lectin domain; the sequence is EDTSTRGTLN…ATLAVQLLLA (88 aa).

This sequence belongs to the glycosyl hydrolase 35 family.

It is found in the secreted. It localises to the extracellular space. The protein localises to the apoplast. The enzyme catalyses Hydrolysis of terminal non-reducing beta-D-galactose residues in beta-D-galactosides.. The sequence is that of Beta-galactosidase 12 from Oryza sativa subsp. japonica (Rice).